The following is a 239-amino-acid chain: Uridylate kinase (239 aa).

Position 13–16 (13–16 (KVSG)) interacts with ATP. Residue glycine 55 coordinates UMP. ATP is bound by residues glycine 56 and arginine 60. UMP contacts are provided by residues aspartate 75 and 136–143 (TGNPFFTT). ATP contacts are provided by threonine 163, glutamine 164, tyrosine 169, and aspartate 172.

The protein belongs to the UMP kinase family. Homohexamer.

Its subcellular location is the cytoplasm. The catalysed reaction is UMP + ATP = UDP + ADP. Its pathway is pyrimidine metabolism; CTP biosynthesis via de novo pathway; UDP from UMP (UMPK route): step 1/1. With respect to regulation, inhibited by UTP. In terms of biological role, catalyzes the reversible phosphorylation of UMP to UDP. In Bartonella quintana (strain Toulouse) (Rochalimaea quintana), this protein is Uridylate kinase.